The primary structure comprises 477 residues: Ribulose bisphosphate carboxylase large chain (477 aa).

The propeptide occupies 1-2 (MS). Proline 3 bears the N-acetylproline mark. Lysine 14 bears the N6,N6,N6-trimethyllysine mark. Positions 123 and 173 each coordinate substrate. Residue lysine 175 is the Proton acceptor of the active site. Position 177 (lysine 177) interacts with substrate. Residues lysine 201, aspartate 203, and glutamate 204 each coordinate Mg(2+). At lysine 201 the chain carries N6-carboxylysine. Histidine 294 (proton acceptor) is an active-site residue. Substrate contacts are provided by arginine 295, histidine 327, and serine 379.

The protein belongs to the RuBisCO large chain family. Type I subfamily. Heterohexadecamer of 8 large chains and 8 small chains; disulfide-linked. The disulfide link is formed within the large subunit homodimers. Mg(2+) is required as a cofactor. In terms of processing, the disulfide bond which can form in the large chain dimeric partners within the hexadecamer appears to be associated with oxidative stress and protein turnover.

The protein resides in the plastid. The protein localises to the chloroplast. It carries out the reaction 2 (2R)-3-phosphoglycerate + 2 H(+) = D-ribulose 1,5-bisphosphate + CO2 + H2O. It catalyses the reaction D-ribulose 1,5-bisphosphate + O2 = 2-phosphoglycolate + (2R)-3-phosphoglycerate + 2 H(+). Functionally, ruBisCO catalyzes two reactions: the carboxylation of D-ribulose 1,5-bisphosphate, the primary event in carbon dioxide fixation, as well as the oxidative fragmentation of the pentose substrate in the photorespiration process. Both reactions occur simultaneously and in competition at the same active site. The protein is Ribulose bisphosphate carboxylase large chain of Nicotiana tomentosiformis (Tobacco).